A 712-amino-acid polypeptide reads, in one-letter code: Polyribonucleotide nucleotidyltransferase (712 aa).

Residues aspartate 487 and aspartate 493 each contribute to the Mg(2+) site. The region spanning 554-613 (PRIEVMNIPVDKIREVIGSGGKVIREIVEKTGAKINIEDDGTVKIASSSGKEIEAARKWI) is the KH domain. Residues 623-691 (GQVYEGTVVK…ERGKVRLSMK (69 aa)) enclose the S1 motif domain.

It belongs to the polyribonucleotide nucleotidyltransferase family. Requires Mg(2+) as cofactor.

It localises to the cytoplasm. It catalyses the reaction RNA(n+1) + phosphate = RNA(n) + a ribonucleoside 5'-diphosphate. Involved in mRNA degradation. Catalyzes the phosphorolysis of single-stranded polyribonucleotides processively in the 3'- to 5'-direction. This Rhizobium johnstonii (strain DSM 114642 / LMG 32736 / 3841) (Rhizobium leguminosarum bv. viciae) protein is Polyribonucleotide nucleotidyltransferase.